We begin with the raw amino-acid sequence, 185 residues long: Ribosome-recycling factor (185 aa).

Residues 132–152 (RRDANEQLKKMEKDSELTEDD) are disordered.

It belongs to the RRF family.

It is found in the cytoplasm. Its function is as follows. Responsible for the release of ribosomes from messenger RNA at the termination of protein biosynthesis. May increase the efficiency of translation by recycling ribosomes from one round of translation to another. The sequence is that of Ribosome-recycling factor from Alkaliphilus metalliredigens (strain QYMF).